Consider the following 993-residue polypeptide: Serine/threonine-protein phosphatase 6 regulatory ankyrin repeat subunit B (993 aa).

ANK repeat units lie at residues 7 to 36 (TDQP…DVNT), 40 to 69 (EKRT…RVNA), 73 to 102 (MWLT…DVNA), 106 to 135 (NWQT…SVNV), 139 to 168 (GGRT…NINA), 172 to 201 (KDRR…EVTC), 205 to 234 (KGYT…EIDE), 238 to 267 (YGNT…NVNQ), 271 to 301 (NGFT…DVNI), 305 to 334 (DGKS…EIDC), 338 to 367 (DGNT…DTAK), 371 to 400 (HSMF…EIDT), 404 to 433 (FGRT…DFHK), 437 to 466 (CGRT…NVNE), 470 to 498 (WGRT…DNSE), 531 to 561 (EGYN…GFEE), 566 to 595 (ATKS…DLDI), 599 to 628 (KGRT…SIFV), 633 to 662 (TKRT…NPEA), 669 to 698 (KGQT…NVDT), 702 to 731 (LGCT…SILC), 735 to 764 (RGRT…SEED), 771 to 800 (QGYT…FRKF), 803 to 832 (NPFT…SSIV), 838 to 867 (KGRT…PVNA), 871 to 901 (SGKT…DLTV), 905 to 934 (DLNT…DESL), and 941 to 970 (ALQT…CVLA).

In terms of assembly, protein phosphatase 6 (PP6) holoenzyme is proposed to be a heterotrimeric complex formed by the catalytic subunit, a SAPS domain-containing subunit (PP6R) and an ankyrin repeat-domain containing regulatory subunit (ARS). Interacts with PPP6R1.

Functionally, putative regulatory subunit of protein phosphatase 6 (PP6) that may be involved in the recognition of phosphoprotein substrates. The protein is Serine/threonine-protein phosphatase 6 regulatory ankyrin repeat subunit B (ANKRD44) of Homo sapiens (Human).